We begin with the raw amino-acid sequence, 134 residues long: Transcriptional activator protein (134 aa).

The Nuclear localization signal signature appears at 17–31; that stretch reads KVQHRIAKKTTRRRR. The segment at 36 to 53 is a zinc-finger region; that stretch reads CGCSYFVALGCHNHGFTH. Residues 73–103 are disordered; it reads KSPVFQDNQTPRETISEEPRHNHNTSPIQLQ. The segment covering 75–85 has biased composition (polar residues); it reads PVFQDNQTPRE. The interval 119–134 is transactivation; sequence NLDSFTSSDLAFLKSI.

This sequence belongs to the geminiviridae transcriptional activator protein family. Monomer. Homodimer. Homooligomer. Self-interaction correlates with nuclear localization and efficient activation of transcription. Monomers suppress local silencing by interacting with and inactivating host adenosine kinase 2 (ADK2) in the cytoplasm. Interacts with and inhibits host SNF1 kinase. Binds to ssDNA. May interact with host RPS27A. In terms of processing, phosphorylated.

It is found in the host nucleus. It localises to the host cytoplasm. Functionally, multifunctional protein that modulates host antiviral defenses and promotes host attractiveness to insect vectors. Acts as a suppressor of RNA-mediated gene silencing, also known as post-transcriptional gene silencing (PTGS), a mechanism of plant viral defense that limits the accumulation of viral RNAs. TrAP suppresses the host RNA silencing by inhibiting adenosine kinase 2 (ADK2), a kinase involved in a general methylation pathway. Also suppresses the host basal defense by interacting with and inhibiting SNF1 kinase, a key regulator of cell metabolism implicated in innate antiviral defense. In terms of biological role, inhibits signal transduction by the phytohormone jasmonate, making the infected plant more attractive to aphids, which are the second host to play a role as a dissemination vector. Acts by binding to ubiquitin precursor RPS27A, thereby preventing ubiquitin degradation of JAZ. This Tomato yellow leaf curl China virus (TYLCCNV) protein is Transcriptional activator protein.